A 122-amino-acid polypeptide reads, in one-letter code: Small ribosomal subunit protein uS13 (122 aa).

The interval 97–122 (PVRGQRTHTNARTRKGPAKAIAGKKK) is disordered.

The protein belongs to the universal ribosomal protein uS13 family. As to quaternary structure, part of the 30S ribosomal subunit. Forms a loose heterodimer with protein S19. Forms two bridges to the 50S subunit in the 70S ribosome.

Its function is as follows. Located at the top of the head of the 30S subunit, it contacts several helices of the 16S rRNA. In the 70S ribosome it contacts the 23S rRNA (bridge B1a) and protein L5 of the 50S subunit (bridge B1b), connecting the 2 subunits; these bridges are implicated in subunit movement. Contacts the tRNAs in the A and P-sites. This Rhizobium rhizogenes (strain K84 / ATCC BAA-868) (Agrobacterium radiobacter) protein is Small ribosomal subunit protein uS13.